A 90-amino-acid polypeptide reads, in one-letter code: Putative antitoxin VapB8 (90 aa).

Positions 1-56 are disordered; that stretch reads MEKSRCHAVAHGGGCAGSAKSHKSGGRCGQGRGAGDSHGTRGAGRRYRAASAPHPL. The span at 26–36 shows a compositional bias: gly residues; sequence GRCGQGRGAGD.

In terms of biological role, antitoxin component of a possible type II toxin-antitoxin (TA) system. The cognate toxin is VapC8. In Mycobacterium tuberculosis (strain ATCC 25618 / H37Rv), this protein is Putative antitoxin VapB8 (vapB8).